We begin with the raw amino-acid sequence, 54 residues long: U7-ctenitoxin-Pk1a (54 aa).

5 disulfide bridges follow: Cys-3–Cys-17, Cys-10–Cys-23, Cys-14–Cys-52, Cys-16–Cys-37, and Cys-25–Cys-35.

Expressed by the venom gland.

The protein localises to the secreted. Blocks voltage-gated sodium channels (Nav). Causes immediate spastic paralysis and death in mice within 1 minute of injection at dose levels of 1.5 ug per mouse. In Phoneutria keyserlingi (Brazilian wandering spider), this protein is U7-ctenitoxin-Pk1a.